A 75-amino-acid chain; its full sequence is Dermaseptin-DA2 (75 aa).

The N-terminal stretch at 1 to 22 is a signal peptide; sequence MALVKKSLFLVLFLGLVSLSIC. A propeptide spanning residues 23 to 42 is cleaved from the precursor; the sequence is EEKRENEDEEEQEDDEQSEE.

This sequence belongs to the frog skin active peptide (FSAP) family. Dermaseptin subfamily. As to expression, expressed by the skin glands.

It is found in the secreted. In terms of biological role, possesses a potent antimicrobial activity against Gram-positive and Gram-negative bacteria. Probably acts by disturbing membrane functions with its amphipathic structure. This Agalychnis dacnicolor (Giant Mexican leaf frog) protein is Dermaseptin-DA2.